We begin with the raw amino-acid sequence, 716 residues long: Polyribonucleotide nucleotidyltransferase (716 aa).

Mg(2+) contacts are provided by Asp-488 and Asp-494. A KH domain is found at 555-614 (PKIETITIPTDKIREVIGTGGKVIREIVATTGAKVDINDEGTVKVSASDGAKIKAAIDWI). The region spanning 624 to 692 (GAIYDGKVVK…DRGKTKLSMK (69 aa)) is the S1 motif domain. The tract at residues 695 to 716 (DQETGEDLSKKEAVSPEEAVNT) is disordered.

The protein belongs to the polyribonucleotide nucleotidyltransferase family. The cofactor is Mg(2+).

The protein resides in the cytoplasm. It carries out the reaction RNA(n+1) + phosphate = RNA(n) + a ribonucleoside 5'-diphosphate. In terms of biological role, involved in mRNA degradation. Catalyzes the phosphorolysis of single-stranded polyribonucleotides processively in the 3'- to 5'-direction. This chain is Polyribonucleotide nucleotidyltransferase, found in Caulobacter sp. (strain K31).